Here is a 706-residue protein sequence, read N- to C-terminus: Probable N(6)-adenosine-methyltransferase MT-A70-like (706 aa).

Disordered regions lie at residues Arg64–Ala114 and Thr223–Trp261. Positions Ser103–Ala114 are enriched in low complexity. Pro residues predominate over residues Leu227–Pro236. Residues Asp479–Ile480 and Asp497 contribute to the S-adenosyl-L-methionine site. Residues Arg567–His580 are positively charged region required for RNA-binding. Residues Lys614, Arg637–Asn640, and Asn650–Gln651 contribute to the S-adenosyl-L-methionine site. Residues Ala669–Ala706 are disordered.

This sequence belongs to the MT-A70-like family.

Its subcellular location is the nucleus. It carries out the reaction an adenosine in mRNA + S-adenosyl-L-methionine = an N(6)-methyladenosine in mRNA + S-adenosyl-L-homocysteine + H(+). Probable N6-methyltransferase that methylates adenosine residues of some mRNAs. N6-methyladenosine (m6A), which is present at internal sites of some mRNAs, may play a role in the efficiency of mRNA splicing, transport or translation. The polypeptide is Probable N(6)-adenosine-methyltransferase MT-A70-like (Oryza sativa subsp. japonica (Rice)).